A 411-amino-acid polypeptide reads, in one-letter code: LL-diaminopimelate aminotransferase (411 aa).

Residues Tyr15 and Gly42 each coordinate substrate. Pyridoxal 5'-phosphate contacts are provided by residues Tyr72, 108-109 (SK), Tyr132, Asn187, Tyr218, and 246-248 (SFS). Residues Lys109, Tyr132, and Asn187 each coordinate substrate. Lys249 carries the post-translational modification N6-(pyridoxal phosphate)lysine. Pyridoxal 5'-phosphate-binding residues include Arg257 and Asn292. Substrate-binding residues include Asn292 and Arg388.

It belongs to the class-I pyridoxal-phosphate-dependent aminotransferase family. LL-diaminopimelate aminotransferase subfamily. As to quaternary structure, homodimer. Requires pyridoxal 5'-phosphate as cofactor.

It carries out the reaction (2S,6S)-2,6-diaminopimelate + 2-oxoglutarate = (S)-2,3,4,5-tetrahydrodipicolinate + L-glutamate + H2O + H(+). It functions in the pathway amino-acid biosynthesis; L-lysine biosynthesis via DAP pathway; LL-2,6-diaminopimelate from (S)-tetrahydrodipicolinate (aminotransferase route): step 1/1. Involved in the synthesis of meso-diaminopimelate (m-DAP or DL-DAP), required for both lysine and peptidoglycan biosynthesis. Catalyzes the direct conversion of tetrahydrodipicolinate to LL-diaminopimelate. This Nostoc punctiforme (strain ATCC 29133 / PCC 73102) protein is LL-diaminopimelate aminotransferase.